The following is a 493-amino-acid chain: UPF0699 transmembrane protein YdbT (493 aa).

Helical transmembrane passes span 18–38 (CHTI…VYIV), 46–66 (FYGA…SIIK), 188–208 (LMAA…FALI), 232–252 (IGIY…FSIA), 370–390 (VIFS…WGYL), and 393–413 (ILLP…AWTI).

It belongs to the UPF0699 family.

It localises to the cell membrane. The polypeptide is UPF0699 transmembrane protein YdbT (ydbT) (Bacillus subtilis (strain 168)).